The following is a 3526-amino-acid chain: WD repeat and FYVE domain-containing protein 3 (3526 aa).

Phosphoserine occurs at positions 1942 and 2278. The sufficient for localization to p62 bodies/ALIS stretch occupies residues 2285–2981 (LTGSRRNRKE…PHPPKRVRSR (697 aa)). 2 disordered regions span residues 2403–2429 (ETNV…PARY) and 2459–2522 (SSEG…EKTD). Positions 2468-2477 (EPEHGEDTIA) are enriched in basic and acidic residues. Serine 2492 bears the Phosphoserine mark. The BEACH-type PH domain occupies 2531 to 2656 (EEGEKIQHMY…IRNKVYQRFL (126 aa)). The interval 2586–3526 (MHEPIIPRGA…RGSEDGPRNC (941 aa)) is interaction with SQSTM1. The region spanning 2683 to 2976 (GLLSTLVGEK…QLFKKPHPPK (294 aa)) is the BEACH domain. The tract at residues 2981–3526 (RLNGDNAGIS…RGSEDGPRNC (546 aa)) is interaction with ATG5. WD repeat units follow at residues 3077-3115 (SEWG…EKAK), 3125-3164 (GHTD…FLTQ), 3167-3206 (GHRA…VSVN), and 3210-3254 (GRSQ…VPET). Positions 3272-3335 (AQIGQEAQDE…SGSDDSRRWS (64 aa)) are disordered. Over residues 3278–3290 (AQDEDSSDSEADE) the composition is skewed to acidic residues. The tract at residues 3313 to 3363 (AASCRATAAWCTDSGSDDSRRWSDQLSLDEKDGFIFVNYSEGQTRAHLQGP) is interaction with GABARAP. A phosphoserine mark is found at serine 3335 and serine 3339. Positions 3346–3349 (FIFV) match the LC3-interacting region (LIR) motif. The stretch at 3408–3447 (AHPAEVTALGISKDHSRILVGDSRGRVFSWSVSDQPGRSA) is one WD 5 repeat. The FYVE-type zinc-finger motif lies at 3454–3514 (DEGGDSCSGC…VCQNCYYNLQ (61 aa)). Zn(2+) contacts are provided by cysteine 3460, cysteine 3463, cysteine 3476, cysteine 3479, cysteine 3484, cysteine 3487, cysteine 3506, and cysteine 3509.

Directly interacts with ATG5 and associates with the ATG12-ATG5-ATG16L complex. Interacts with p62/SQSTM1; this interaction is required to recruit WDFY3 to cytoplasmic bodies and to PML bodies. Directly interacts with GABARAP, GABARAPL1 and GABARAPL2; the interaction with GABARAP is required for WDFY3 recruitment to MAP1LC3B-positive p62/SQSTM1 bodies. Weakly interacts with MAP1LC3C; this interaction is direct. Does not interact with MAP1LC3A, nor MAP1LC3B. Interacts with TRAF6. Expressed in osteoclast and their mononuclear precursors (at protein level).

It localises to the nucleus membrane. It is found in the cytoplasm. Its subcellular location is the cytosol. The protein resides in the nucleus. The protein localises to the PML body. It localises to the membrane. It is found in the perikaryon. Its subcellular location is the cell projection. The protein resides in the axon. In terms of biological role, required for selective macroautophagy (aggrephagy). Acts as an adapter protein by linking specific proteins destined for degradation to the core autophagic machinery members, such as the ATG5-ATG12-ATG16L E3-like ligase, SQSTM1 and LC3. Along with p62/SQSTM1, involved in the formation and autophagic degradation of cytoplasmic ubiquitin-containing inclusions (p62 bodies, ALIS/aggresome-like induced structures). Along with SQSTM1, required to recruit ubiquitinated proteins to PML bodies in the nucleus. Important for normal brain development. Essential for the formation of axonal tracts throughout the brain and spinal cord, including the formation of the major forebrain commissures. Involved in the ability of neural cells to respond to guidance cues. Required for cortical neurons to respond to the trophic effects of netrin-1/NTN1. Regulates Wnt signaling through the removal of DVL3 aggregates, likely in an autophagy-dependent manner. This process may be important for the determination of brain size during embryonic development. May regulate osteoclastogenesis by acting on the TNFSF11/RANKL - TRAF6 pathway. After cytokinetic abscission, involved in midbody remnant degradation. In vitro strongly binds to phosphatidylinositol 3-phosphate (PtdIns3P). This Homo sapiens (Human) protein is WD repeat and FYVE domain-containing protein 3 (WDFY3).